Consider the following 352-residue polypeptide: Phosphatidylglycerol--prolipoprotein diacylglyceryl transferase (352 aa).

Transmembrane regions (helical) follow at residues 20 to 40, 55 to 75, 97 to 117, and 122 to 142; these read WYGL…TWLA, FITY…VLFY, EGGM…LLYA, and VNSL…VFFG. A 1,2-diacyl-sn-glycero-3-phospho-(1'-sn-glycerol) is bound at residue Arg-143. The next 3 membrane-spanning stretches (helical) occupy residues 248–268, 275–295, and 314–334; these read SQLF…FFLW, GFIA…DEHF, and WLSL…TRAA.

It belongs to the Lgt family.

It is found in the cell inner membrane. It carries out the reaction L-cysteinyl-[prolipoprotein] + a 1,2-diacyl-sn-glycero-3-phospho-(1'-sn-glycerol) = an S-1,2-diacyl-sn-glyceryl-L-cysteinyl-[prolipoprotein] + sn-glycerol 1-phosphate + H(+). It functions in the pathway protein modification; lipoprotein biosynthesis (diacylglyceryl transfer). Catalyzes the transfer of the diacylglyceryl group from phosphatidylglycerol to the sulfhydryl group of the N-terminal cysteine of a prolipoprotein, the first step in the formation of mature lipoproteins. The polypeptide is Phosphatidylglycerol--prolipoprotein diacylglyceryl transferase (Bdellovibrio bacteriovorus (strain ATCC 15356 / DSM 50701 / NCIMB 9529 / HD100)).